The chain runs to 39 residues: B melanoma antigen 4 (39 aa).

The N-terminal stretch at 1 to 17 (MAAGAVFLALSAQLLQA) is a signal peptide.

It belongs to the BAGE family. In terms of tissue distribution, not expressed in normal tissues except in testis. Expressed in melanoma, bladder and lung carcinomas.

It localises to the secreted. Unknown. Candidate gene encoding tumor antigens. The chain is B melanoma antigen 4 (BAGE4) from Homo sapiens (Human).